The chain runs to 305 residues: Probable lipid kinase YegS-like (305 aa).

The DAGKc domain occupies 1-129; it reads MTQRRAMLIL…VDLGEVGGKL (129 aa). Residues Thr-39, 65-71, and Thr-92 each bind ATP; that span reads GDGTLRD. Residues Leu-210, Asp-213, and Leu-215 each coordinate Mg(2+). The active-site Proton acceptor is the Glu-268.

It belongs to the diacylglycerol/lipid kinase family. YegS lipid kinase subfamily. It depends on Mg(2+) as a cofactor. Ca(2+) serves as cofactor.

The protein resides in the cytoplasm. Functionally, probably phosphorylates lipids; the in vivo substrate is unknown. This chain is Probable lipid kinase YegS-like, found in Pseudomonas savastanoi pv. phaseolicola (strain 1448A / Race 6) (Pseudomonas syringae pv. phaseolicola (strain 1448A / Race 6)).